A 158-amino-acid chain; its full sequence is NADH-quinone oxidoreductase subunit B 2 (158 aa).

Residues Cys-37, Cys-38, Cys-102, and Cys-132 each coordinate [4Fe-4S] cluster.

This sequence belongs to the complex I 20 kDa subunit family. In terms of assembly, NDH-1 is composed of 14 different subunits. Subunits NuoB, C, D, E, F, and G constitute the peripheral sector of the complex. [4Fe-4S] cluster is required as a cofactor.

The protein resides in the cell inner membrane. It carries out the reaction a quinone + NADH + 5 H(+)(in) = a quinol + NAD(+) + 4 H(+)(out). Functionally, NDH-1 shuttles electrons from NADH, via FMN and iron-sulfur (Fe-S) centers, to quinones in the respiratory chain. Couples the redox reaction to proton translocation (for every two electrons transferred, four hydrogen ions are translocated across the cytoplasmic membrane), and thus conserves the redox energy in a proton gradient. The polypeptide is NADH-quinone oxidoreductase subunit B 2 (Nitrosospira multiformis (strain ATCC 25196 / NCIMB 11849 / C 71)).